A 670-amino-acid polypeptide reads, in one-letter code: Histone-lysine N-methyltransferase, H3 lysine-9 specific SUVH1 (670 aa).

A disordered region spans residues 53–140; it reads YPFSSSQANQ…RPISRPENMN (88 aa). Over residues 68–79 the composition is skewed to low complexity; it reads NQAQYPPQHQQP. Residues 123 to 133 are compositionally biased toward basic residues; sequence VKRRIPKKRPI. The YDG domain maps to 211 to 357; that stretch reads GIVPGVEIGD…HNTFKYKLVR (147 aa). One can recognise a Pre-SET domain in the interval 432-492; it reads FGCDCANLCK…TCKNKVTQMG (61 aa). Residues Cys434, Cys436, Cys440, Cys447, Cys449, Cys475, Cys479, Cys481, and Cys484 each coordinate Zn(2+). The 145-residue stretch at 495-639 folds into the SET domain; sequence VRLEVFKTAN…PMTELTYDYG (145 aa). S-adenosyl-L-methionine is bound by residues 505 to 507, Asp541, Tyr543, Arg593, and 596 to 597; these read RGW and NH. Positions 599, 658, 660, and 665 each coordinate Zn(2+). The 17-residue stretch at 654 to 670 folds into the Post-SET domain; it reads GKRKCFCGSAYCRGSFG.

The protein belongs to the class V-like SAM-binding methyltransferase superfamily. Histone-lysine methyltransferase family. Suvar3-9 subfamily. In terms of tissue distribution, expressed in leaves stems and flowers.

The protein resides in the nucleus. The protein localises to the chromosome. It is found in the centromere. The enzyme catalyses L-lysyl(9)-[histone H3] + 2 S-adenosyl-L-methionine = N(6),N(6)-dimethyl-L-lysyl(9)-[histone H3] + 2 S-adenosyl-L-homocysteine + 2 H(+). Its function is as follows. Histone methyltransferase. Methylates 'Lys-9' of histone H3. H3 'Lys-9' methylation represents a specific tag for epigenetic transcriptional repression. This is Histone-lysine N-methyltransferase, H3 lysine-9 specific SUVH1 (SUVH1) from Arabidopsis thaliana (Mouse-ear cress).